Here is a 445-residue protein sequence, read N- to C-terminus: Methionine aminopeptidase 2 (445 aa).

A disordered region spans residues 1–80; the sequence is MAAQVASGVG…TSKVQTEPPR (80 aa). Residues 57-71 are compositionally biased toward basic residues; the sequence is AKKKKKKTKKKKKGT. Histidine 195 provides a ligand contact to substrate. A divalent metal cation-binding residues include aspartate 215, aspartate 226, and histidine 295. A substrate-binding site is contributed by histidine 303. The a divalent metal cation site is built by glutamate 331 and glutamate 426.

The protein belongs to the peptidase M24A family. Methionine aminopeptidase eukaryotic type 2 subfamily. Co(2+) is required as a cofactor. The cofactor is Zn(2+). Requires Mn(2+) as cofactor. Fe(2+) serves as cofactor.

It is found in the cytoplasm. It catalyses the reaction Release of N-terminal amino acids, preferentially methionine, from peptides and arylamides.. Its function is as follows. Cotranslationally removes the N-terminal methionine from nascent proteins. The N-terminal methionine is often cleaved when the second residue in the primary sequence is small and uncharged (Met-Ala-, Cys, Gly, Pro, Ser, Thr, or Val). The sequence is that of Methionine aminopeptidase 2 from Paracoccidioides brasiliensis (strain Pb03).